Reading from the N-terminus, the 352-residue chain is 2'-dehydrokanamycin reductase (352 aa).

Belongs to the NAD(P)-dependent epimerase/dehydratase family.

It catalyses the reaction 2'-dehydrokanamycin A + NADPH + H(+) = kanamycin A + NADP(+). Its pathway is antibiotic biosynthesis; kanamycin biosynthesis. Mediates the conversion of 2'-dehydrokanamycin A into kanamycin A. The chain is 2'-dehydrokanamycin reductase (kanK) from Streptomyces kanamyceticus.